Here is a 704-residue protein sequence, read N- to C-terminus: Cystathionine beta-synthase cbs-1 (704 aa).

Residues N454, 562–566 (GTGGT), and S652 contribute to the pyridoxal 5'-phosphate site.

The protein belongs to the cysteine synthase/cystathionine beta-synthase family. Monomer. In terms of assembly, does not bind pyridoxal 5'-phosphate, PLP; which may explain why this isoform has virtually undetectable catalytic activity. Pyridoxal 5'-phosphate is required as a cofactor.

It localises to the cytoplasm. The enzyme catalyses L-homocysteine + L-serine = L,L-cystathionine + H2O. Its pathway is amino-acid biosynthesis; L-cysteine biosynthesis; L-cysteine from L-homocysteine and L-serine: step 1/2. Hydro-lyase catalyzing the first step of the transsulfuration pathway, where the hydroxyl group of L-serine is displaced by L-homocysteine in a beta-replacement reaction to form L-cystathionine, the precursor of L-cysteine. Plays a role in maintaining homocysteine homeostasis. Involved in cold-induced somatic longevity mediated by prostaglandin E2 (PGE2) signals from adult germ cells, perhaps acting via a role in the production of hydrogen sulfide (H2S). Required for normal development. This chain is Cystathionine beta-synthase cbs-1, found in Caenorhabditis elegans.